We begin with the raw amino-acid sequence, 265 residues long: Capsule polysaccharide export inner-membrane protein BexB (265 aa).

6 helical membrane-spanning segments follow: residues 37–57 (IGFF…VMMW), 64–84 (KFST…AMMW), 118–138 (LLEV…LVMI), 151–171 (LIAW…ICAI), 178–198 (FGKI…AFFF), and 235–255 (ESIG…LVMV). An ABC transmembrane type-2 domain is found at 37-258 (IGFFWLFVEP…LLGLVMVKNF (222 aa)).

This sequence belongs to the ABC-2 integral membrane protein family.

Its subcellular location is the cell inner membrane. In terms of biological role, may form an ATP-driven capsule polysaccharide export apparatus, in association with the BexA, BexC and BexD proteins. This is Capsule polysaccharide export inner-membrane protein BexB (bexB) from Haemophilus influenzae.